A 205-amino-acid polypeptide reads, in one-letter code: Regulatory protein RecX (205 aa).

This sequence belongs to the RecX family.

The protein localises to the cytoplasm. Modulates RecA activity. This is Regulatory protein RecX from Finegoldia magna (strain ATCC 29328 / DSM 20472 / WAL 2508) (Peptostreptococcus magnus).